A 358-amino-acid polypeptide reads, in one-letter code: MVDIIFSSSFLDDMGDHSKKKSGLAMCVGCGSQIHDQYILRVSPDLEWHAACLKCVECNQYLDETCTCFVRDGKTYCKRDYVRLFGIKCAKCTLGFSSSDLVMRARDSVYHIECFRCSVCSRQLLPGDEFSVRDEELLCRADHGLALERGPGGSPLSPGNIHTRGLHMAADPVSVRQTPHRNHVHKQSEKTTRVRTVLNEKQLHTLRTCYNANPRPDALMKEQLVEMTGLSPRVIRVWFQNKRCKDKKRSILMKQLQQQHGDKTNLQGMTGTALVAGSPIRHNPSVPGHPVDVQAYQPPWKALSEFALQSDLDQPAFQQLVSFSESGSLGNSSGSDVTSLSSQLPDTPNSMVPSPVET.

LIM zinc-binding domains are found at residues 27 to 80 and 89 to 143; these read CVGC…CKRD and CAKC…RADH. Residues 191-250 constitute a DNA-binding region (homeobox); the sequence is TTRVRTVLNEKQLHTLRTCYNANPRPDALMKEQLVEMTGLSPRVIRVWFQNKRCKDKKRS. Over residues 325-335 the composition is skewed to low complexity; sequence ESGSLGNSSGS. The interval 325 to 358 is disordered; the sequence is ESGSLGNSSGSDVTSLSSQLPDTPNSMVPSPVET. A compositionally biased stretch (polar residues) spans 336 to 358; the sequence is DVTSLSSQLPDTPNSMVPSPVET.

The protein resides in the nucleus. Its function is as follows. Binds to one of the cis-acting domain of the insulin gene enhancer. May be involved in the regional specification of the myotome and also in target recognition by the caudal primary neuron. In Danio rerio (Zebrafish), this protein is Insulin gene enhancer protein isl-2b (isl2b).